The chain runs to 165 residues: Short form salivary protein D7R4 (165 aa).

Positions 1-21 (MIRQVITSYFLTVCLLALVQG) are cleaved as a signal peptide. 3 disulfide bridges follow: C27–C59, C40–C165, and C98–C117. E28 and R43 together coordinate noradrenaline. E28 is a binding site for serotonin. H56, Y115, D132, and E135 together coordinate serotonin. 3 residues coordinate histamine: Y115, D132, and E135. Residues Y115, D132, and E135 each contribute to the tryptamine site. Positions 132 and 135 each coordinate noradrenaline.

Belongs to the PBP/GOBP family. In terms of tissue distribution, female saliva (at protein level). Female salivary gland. Not detected in female carcass without salivary glands. Not detected in male tissues.

It localises to the secreted. In terms of biological role, modulates blood feeding of female mosquitoes on vertebrate species by binding and sequestering different mediators involved in the host response. Binds serotonin, noradrenaline, histamine and tryptamine. Inhibits histamine-, serotonin- and partially noradrenaline-induced smooth muscle contraction. Exhibits vasodilating activity. In Anopheles gambiae (African malaria mosquito), this protein is Short form salivary protein D7R4.